Here is a 383-residue protein sequence, read N- to C-terminus: Dual-specificity RNA methyltransferase RlmN (383 aa).

E93 (proton acceptor) is an active-site residue. The Radical SAM core domain occupies 99–339 (EETRGTLCVS…TTIRKTRGDD (241 aa)). C106 and C344 are disulfide-bonded. [4Fe-4S] cluster-binding residues include C113, C117, and C120. Residues 170–171 (GE), S202, 224–226 (SLH), and N301 contribute to the S-adenosyl-L-methionine site. C344 acts as the S-methylcysteine intermediate in catalysis.

The protein belongs to the radical SAM superfamily. RlmN family. Requires [4Fe-4S] cluster as cofactor.

It localises to the cytoplasm. It catalyses the reaction adenosine(2503) in 23S rRNA + 2 reduced [2Fe-2S]-[ferredoxin] + 2 S-adenosyl-L-methionine = 2-methyladenosine(2503) in 23S rRNA + 5'-deoxyadenosine + L-methionine + 2 oxidized [2Fe-2S]-[ferredoxin] + S-adenosyl-L-homocysteine. The enzyme catalyses adenosine(37) in tRNA + 2 reduced [2Fe-2S]-[ferredoxin] + 2 S-adenosyl-L-methionine = 2-methyladenosine(37) in tRNA + 5'-deoxyadenosine + L-methionine + 2 oxidized [2Fe-2S]-[ferredoxin] + S-adenosyl-L-homocysteine. Specifically methylates position 2 of adenine 2503 in 23S rRNA and position 2 of adenine 37 in tRNAs. m2A2503 modification seems to play a crucial role in the proofreading step occurring at the peptidyl transferase center and thus would serve to optimize ribosomal fidelity. In Ralstonia nicotianae (strain ATCC BAA-1114 / GMI1000) (Ralstonia solanacearum), this protein is Dual-specificity RNA methyltransferase RlmN.